The primary structure comprises 123 residues: Large ribosomal subunit protein bL12 (123 aa).

Belongs to the bacterial ribosomal protein bL12 family. In terms of assembly, homodimer. Part of the ribosomal stalk of the 50S ribosomal subunit. Forms a multimeric L10(L12)X complex, where L10 forms an elongated spine to which 2 to 4 L12 dimers bind in a sequential fashion. Binds GTP-bound translation factors.

Its function is as follows. Forms part of the ribosomal stalk which helps the ribosome interact with GTP-bound translation factors. Is thus essential for accurate translation. The chain is Large ribosomal subunit protein bL12 from Neisseria gonorrhoeae (strain NCCP11945).